The chain runs to 1469 residues: Actin cytoskeleton-regulatory complex protein pan1 (1469 aa).

A disordered region spans residues 1-163 (MYSSSNSFLG…PPPKSSGSKI (163 aa)). Residues 17–52 (PGQQPPFMQQQQQPSYSQFPPGQQQQPQPTGFAPQP) show a composition bias toward low complexity. Over residues 54-83 (GYAQPQLSSFGSQLQPQPTGFPSGQLQPQF) the composition is skewed to polar residues. Positions 85-124 (GFPGAAPQQSQQPQPTGFQPQQPQFTGYPPQSQPPQLQVP) are enriched in low complexity. In terms of domain architecture, EH 1 spans 175-263 (DQAKFEQLFK…ETIKNEVSSM (89 aa)). The 36-residue stretch at 207-242 (LSGSDLSKIWVLSDSTKSGQLFFPEFALAMYLCNLR) folds into the EF-hand 1 domain. Disordered stretches follow at residues 276–311 (PEPV…QPTN) and 323–409 (TGFL…LVAQ). Residues 298-307 (PPAPQQPQPQ) show a composition bias toward pro residues. Positions 323–346 (TGFLSQPTGLSPNQAPFGQQSNLA) are enriched in polar residues. The span at 347–366 (PQPTGLPGQPQQQSLQPQPT) shows a compositional bias: low complexity. Residues 391–401 (YASNLSPSQTG) are compositionally biased toward polar residues. Positions 466 to 555 (EKKIYDDLFR…PELIPPSTRN (90 aa)) constitute an EH 2 domain. The 36-residue stretch at 499–534 (LNRQDLERIWTLADPNNRGRLNMDEFAVAMHLIYRK) folds into the EF-hand 2 domain. Disordered regions lie at residues 619 to 650 (AAAG…SEDE), 801 to 845 (AAEL…RDVE), and 898 to 1469 (TAHI…RVLD). Polar residues predominate over residues 634–646 (NGRTPSPAASSQA). Residues 641–767 (AASSQASEDE…LFRLKDAKAH (127 aa)) adopt a coiled-coil conformation. The segment covering 818–845 (AAARRLESESANVKADREKNDAMTRDVE) has biased composition (basic and acidic residues). Composition is skewed to low complexity over residues 908–917 (RASPSQSQQS) and 933–942 (TGSTGSLPGT). Composition is skewed to basic and acidic residues over residues 943–961 (THED…RIAE), 981–1016 (RQER…EERG), 1039–1106 (ARTD…RLRA), 1117–1137 (KKQE…EQEA), and 1144–1161 (AELE…RELE). The stretch at 973 to 1172 (EASETLVQRQ…MEEESSSDDE (200 aa)) forms a coiled coil. A compositionally biased stretch (acidic residues) spans 1162–1174 (AMEEESSSDDEGP). Residues 1193–1209 (EAPPPPPPAPATAPPVP) are compositionally biased toward pro residues. The span at 1210 to 1227 (AIAEPEAPTSPATSPASS) shows a compositional bias: low complexity. The span at 1264 to 1284 (SDTHSTNPFHRLAQQQESTAP) shows a compositional bias: polar residues. Residues 1368–1378 (PEADAAPSAPV) are compositionally biased toward low complexity. 2 stretches are compositionally biased toward pro residues: residues 1379–1391 (AAPP…PVPA) and 1400–1430 (APPP…PPAA). In terms of domain architecture, WH2 spans 1436–1453 (DRGALLASIQAGKGLRKV). Residues 1456–1469 (NDRSTSSTAGRVLD) show a composition bias toward polar residues.

Belongs to the PAN1 family. As to quaternary structure, component of the PAN1 actin cytoskeleton-regulatory complex.

It is found in the cell membrane. The protein localises to the endosome membrane. Its subcellular location is the cytoplasm. It localises to the cytoskeleton. The protein resides in the actin patch. Functionally, component of the PAN1 actin cytoskeleton-regulatory complex required for the internalization of endosomes during actin-coupled endocytosis. The complex links the site of endocytosis to the cell membrane-associated actin cytoskeleton. Mediates uptake of external molecules and vacuolar degradation of plasma membrane proteins. Plays a role in the proper organization of the cell membrane-associated actin cytoskeleton and promotes its destabilization. The sequence is that of Actin cytoskeleton-regulatory complex protein pan1 (pan1) from Aspergillus terreus (strain NIH 2624 / FGSC A1156).